The chain runs to 428 residues: Adenylosuccinate synthetase (428 aa).

GTP contacts are provided by residues 12–18 and 40–42; these read GDEGKGK and GHT. Asp13 functions as the Proton acceptor in the catalytic mechanism. Mg(2+) contacts are provided by Asp13 and Gly40. IMP-binding positions include 13–16, 38–41, Thr129, Arg143, Gln224, Thr239, and Arg303; these read DEGK and NAGH. The active-site Proton donor is His41. A substrate-binding site is contributed by 299-305; it reads VTTGRIR. Residues Arg305, 331–333, and 410–412 each bind GTP; these read KVD and AYG.

This sequence belongs to the adenylosuccinate synthetase family. Homodimer. Mg(2+) serves as cofactor.

It localises to the cytoplasm. The catalysed reaction is IMP + L-aspartate + GTP = N(6)-(1,2-dicarboxyethyl)-AMP + GDP + phosphate + 2 H(+). Its pathway is purine metabolism; AMP biosynthesis via de novo pathway; AMP from IMP: step 1/2. Its function is as follows. Plays an important role in the de novo pathway of purine nucleotide biosynthesis. Catalyzes the first committed step in the biosynthesis of AMP from IMP. The protein is Adenylosuccinate synthetase of Francisella tularensis subsp. mediasiatica (strain FSC147).